A 658-amino-acid chain; its full sequence is ATP-dependent RNA helicase DDX3Y (658 aa).

The interval 1–143 (MSQVAAESTA…DWSKPLPPSE (143 aa)) is disordered. At Ser-2 the chain carries N-acetylserine. The segment covering 45 to 69 (RNRETSKGVCDKDSSGWSCSKDKDA) has biased composition (basic and acidic residues). Lys-56 carries the N6-acetyllysine modification. 2 positions are modified to phosphoserine: Ser-86 and Ser-90. Residues 94-129 (GRFDDHGRNDYDGIGGRDRTGFGKFERSGHSRWSDR) show a composition bias toward basic and acidic residues. An Omega-N-methylarginine modification is found at Arg-101. Tyr-104 carries the post-translational modification Phosphotyrosine. Arg-110 is subject to Omega-N-methylarginine. Position 117 is an N6-acetyllysine (Lys-117). A phosphoserine mark is found at Ser-130 and Ser-182. A Q motif motif is present at residues 179–207 (ENFSDIEMGEIIMGNIELTRYTRPTPVQK). 199–206 (YTRPTPVQ) serves as a coordination point for ATP. The 193-residue stretch at 210 to 402 (IPIIKEKRDL…RDFLDEYIFL (193 aa)) folds into the Helicase ATP-binding domain. Lys-214 participates in a covalent cross-link: Glycyl lysine isopeptide (Lys-Gly) (interchain with G-Cter in SUMO2). 223–230 (AQTGSGKT) contacts ATP. The DEAD box motif lies at 346 to 349 (DEAD). Positions 413 to 574 (NITQKVVWVE…EVPSWLESMA (162 aa)) constitute a Helicase C-terminal domain. At Ser-455 the chain carries Phosphoserine. Omega-N-methylarginine is present on Arg-590. A phosphoserine mark is found at Ser-592 and Ser-603. The tract at residues 597–627 (ARDYRQSSGSANAGFNSNRANSSRSSGSSHN) is disordered. The span at 603-627 (SSGSANAGFNSNRANSSRSSGSSHN) shows a compositional bias: low complexity. Residues Arg-615 and Arg-628 each carry the omega-N-methylarginine modification.

It belongs to the DEAD box helicase family. DDX3/DED1 subfamily. Found in heart, brain, liver, skeletal muscle, kidney and testis. Low expression detected in lung. In testis, expressed in all types of spermatogenic cells including spermatogonia, spermatocytes, spermatids and somatic Sertoli cells within the seminiferous tubules. Also expressed in Leydig cells and other interstitial cells.

The protein localises to the cytoplasm. It is found in the nucleus. It carries out the reaction ATP + H2O = ADP + phosphate + H(+). Probable ATP-dependent RNA helicase. During immune response, may enhance IFNB1 expression via IRF3/IRF7 pathway. The chain is ATP-dependent RNA helicase DDX3Y (Ddx3y) from Mus musculus (Mouse).